The sequence spans 312 residues: Phosphoribosylglycinamide formyltransferase, chloroplastic (312 aa).

The transit peptide at Met-1–Trp-73 directs the protein to the chloroplast. Gly-109–Asn-111 is a binding site for N(1)-(5-phospho-beta-D-ribosyl)glycinamide. (6R)-10-formyltetrahydrofolate contacts are provided by residues Lys-162, Leu-187–Ile-190, and Asn-204. His-206 functions as the Proton donor in the catalytic mechanism. Asp-247 serves as a coordination point for (6R)-10-formyltetrahydrofolate. Position 276 (Glu-276) interacts with N(1)-(5-phospho-beta-D-ribosyl)glycinamide.

It belongs to the GART family.

The protein localises to the plastid. It localises to the chloroplast. It catalyses the reaction N(1)-(5-phospho-beta-D-ribosyl)glycinamide + (6R)-10-formyltetrahydrofolate = N(2)-formyl-N(1)-(5-phospho-beta-D-ribosyl)glycinamide + (6S)-5,6,7,8-tetrahydrofolate + H(+). It functions in the pathway purine metabolism; IMP biosynthesis via de novo pathway; N(2)-formyl-N(1)-(5-phospho-D-ribosyl)glycinamide from N(1)-(5-phospho-D-ribosyl)glycinamide (10-formyl THF route): step 1/1. This is Phosphoribosylglycinamide formyltransferase, chloroplastic (PUR3) from Vigna unguiculata (Cowpea).